The following is a 619-amino-acid chain: Putative zinc transporter At3g08650 (619 aa).

15 helical membrane-spanning segments follow: residues 25 to 45, 102 to 122, 129 to 149, 155 to 175, 198 to 218, 230 to 250, 261 to 281, 289 to 309, 354 to 374, 383 to 403, 405 to 425, 465 to 485, 528 to 548, 552 to 572, and 585 to 605; these read MMHSSCKGLVLLLFLFVVVFI, VALFTLAMAAATGLGAVPFFF, WAGICNGMAAGVMLAASFDLV, HGSGNWVVTGILAGALFIWLC, VVLVIGIMTLHSFGEGSGVGV, LLVTLAIAVHNIPEGLAVSMV, AMLWSIITSLPQPLVAVPAFL, FLPFCTGFAAGCMIWMVIAEV, GFFVSLLFGLGPLLGGVFLVA, HALLMGVASGIAFVLGLWRPL, LLLSAKMGLIPLVSLLAIGAG, LLACGAVGFHALAEGLALGVA, AAALIGFVGPISAIGSILAGI, GLDHVMVVACGGLLPSFWQVI, and VGMVLGLACAVVCLTFTRLVC.

Belongs to the ZIP transporter (TC 2.A.5) family. ZupT subfamily.

It localises to the membrane. In terms of biological role, may transport zinc. The polypeptide is Putative zinc transporter At3g08650 (Arabidopsis thaliana (Mouse-ear cress)).